A 132-amino-acid polypeptide reads, in one-letter code: Large-conductance mechanosensitive channel (132 aa).

The next 2 membrane-spanning stretches (helical) occupy residues valine 14 to leucine 34 and glycine 67 to valine 87.

This sequence belongs to the MscL family. Homopentamer.

The protein resides in the cell membrane. Its function is as follows. Channel that opens in response to stretch forces in the membrane lipid bilayer. May participate in the regulation of osmotic pressure changes within the cell. The sequence is that of Large-conductance mechanosensitive channel from Bacillus anthracis (strain A0248).